Consider the following 293-residue polypeptide: Ribosomal protein L11 methyltransferase (293 aa).

S-adenosyl-L-methionine is bound by residues Thr145, Gly166, Asp188, and Asn230.

The protein belongs to the methyltransferase superfamily. PrmA family.

The protein resides in the cytoplasm. The enzyme catalyses L-lysyl-[protein] + 3 S-adenosyl-L-methionine = N(6),N(6),N(6)-trimethyl-L-lysyl-[protein] + 3 S-adenosyl-L-homocysteine + 3 H(+). In terms of biological role, methylates ribosomal protein L11. In Sodalis glossinidius (strain morsitans), this protein is Ribosomal protein L11 methyltransferase.